We begin with the raw amino-acid sequence, 114 residues long: rRNA-processing protein cgrA (114 aa).

Positions 1-13 (MSSAAPAPSTHAA) are enriched in low complexity. Disordered stretches follow at residues 1-47 (MSSA…AARK) and 77-114 (RRAA…LLNS). The stretch at 40–101 (TKRAAARKEQ…EKMHRKRVER (62 aa)) forms a coiled coil. Residues 77 to 93 (RRAAKEEKERYEKMAEK) show a composition bias toward basic and acidic residues. Residues 94–114 (MHRKRVERLKKREKRNKLLNS) are compositionally biased toward basic residues.

This sequence belongs to the CGR1 family.

It localises to the nucleus. It is found in the nucleolus. Functionally, involved in nucleolar integrity and required for processing of the pre-rRNA for the 60S ribosome subunit. This Emericella nidulans (strain FGSC A4 / ATCC 38163 / CBS 112.46 / NRRL 194 / M139) (Aspergillus nidulans) protein is rRNA-processing protein cgrA (cgrA).